The sequence spans 423 residues: Serine hydroxymethyltransferase (423 aa).

Residues leucine 120 and glycine 124 to leucine 126 contribute to the (6S)-5,6,7,8-tetrahydrofolate site. The residue at position 229 (lysine 229) is an N6-(pyridoxal phosphate)lysine. Serine 353 to phenylalanine 355 lines the (6S)-5,6,7,8-tetrahydrofolate pocket.

The protein belongs to the SHMT family. In terms of assembly, homodimer. It depends on pyridoxal 5'-phosphate as a cofactor.

Its subcellular location is the cytoplasm. The catalysed reaction is (6R)-5,10-methylene-5,6,7,8-tetrahydrofolate + glycine + H2O = (6S)-5,6,7,8-tetrahydrofolate + L-serine. The protein operates within one-carbon metabolism; tetrahydrofolate interconversion. It participates in amino-acid biosynthesis; glycine biosynthesis; glycine from L-serine: step 1/1. In terms of biological role, catalyzes the reversible interconversion of serine and glycine with tetrahydrofolate (THF) serving as the one-carbon carrier. This reaction serves as the major source of one-carbon groups required for the biosynthesis of purines, thymidylate, methionine, and other important biomolecules. Also exhibits THF-independent aldolase activity toward beta-hydroxyamino acids, producing glycine and aldehydes, via a retro-aldol mechanism. This chain is Serine hydroxymethyltransferase, found in Prochlorococcus marinus (strain AS9601).